The sequence spans 505 residues: Trans-cinnamate 4-monooxygenase (505 aa).

The chain crosses the membrane as a helical span at residues 3–23 (LLLLEKTLLGLFIAAITAIAI). (E)-cinnamate-binding positions include 213–218 (RSRLAQ) and A306. Heme is bound at residue C447.

Belongs to the cytochrome P450 family. The cofactor is heme.

It is found in the membrane. The catalysed reaction is (E)-cinnamate + reduced [NADPH--hemoprotein reductase] + O2 = (E)-4-coumarate + oxidized [NADPH--hemoprotein reductase] + H2O + H(+). It functions in the pathway phenylpropanoid metabolism; trans-4-coumarate biosynthesis; trans-4-coumarate from trans-cinnamate: step 1/1. Its function is as follows. Catalyzes the first oxidative step of the phenylpropanoid pathway in higher plants by transforming trans-cinnamate into p-coumarate. The compounds formed by this pathway are essential components for lignification, pollination, and defense against ultraviolet light, predators and pathogens. The sequence is that of Trans-cinnamate 4-monooxygenase (CYP73A14) from Glycyrrhiza echinata (Licorice).